The chain runs to 161 residues: Anaerobic nitrite reductase HB2 (161 aa).

Positions 5–154 constitute a Globin domain; that stretch reads VFTEKQEALV…LALAIKAEMK (150 aa). A Homodimerization motif is present at residues 38–42; that stretch reads EIAPA. Residues S48, K62, H66, and H101 each coordinate heme b. The Homodimerization signature appears at 108-120; that stretch reads DPHFEVVKEALVR.

Belongs to the plant globin family. In terms of assembly, homodimer. Heme b serves as cofactor.

Its subcellular location is the cytoplasm. The protein localises to the nucleus. It catalyses the reaction Fe(III)-heme b-[protein] + nitric oxide + H2O = Fe(II)-heme b-[protein] + nitrite + 2 H(+). In terms of biological role, phytoglobin that reduces nitrite to nitric oxide (NO) under anoxic conditions (e.g. during flooding or in waterlogged soil). May not function as an oxygen storage or transport protein. Has an unusually high affinity for O(2) through an hexacoordinate heme iron because of a very low dissociation constant. The polypeptide is Anaerobic nitrite reductase HB2 (Brassica napus (Rape)).